Reading from the N-terminus, the 554-residue chain is 3-(3-hydroxy-phenyl)propionate/3-hydroxycinnamic acid hydroxylase (554 aa).

Residues 17–46 (QVAI…VVEK) and 285–295 (FRIDRVLLAGD) contribute to the FAD site.

It belongs to the PheA/TfdB FAD monooxygenase family. The cofactor is FAD.

The enzyme catalyses 3-(3-hydroxyphenyl)propanoate + NADH + O2 + H(+) = 3-(2,3-dihydroxyphenyl)propanoate + NAD(+) + H2O. The catalysed reaction is (2E)-3-(3-hydroxyphenyl)prop-2-enoate + NADH + O2 + H(+) = (2E)-3-(2,3-dihydroxyphenyl)prop-2-enoate + NAD(+) + H2O. It functions in the pathway aromatic compound metabolism; 3-phenylpropanoate degradation. Functionally, catalyzes the insertion of one atom of molecular oxygen into position 2 of the phenyl ring of 3-(3-hydroxyphenyl)propionate (3-HPP) and hydroxycinnamic acid (3HCI). The chain is 3-(3-hydroxy-phenyl)propionate/3-hydroxycinnamic acid hydroxylase from Escherichia coli O139:H28 (strain E24377A / ETEC).